A 342-amino-acid polypeptide reads, in one-letter code: S-adenosyl-L-methionine-dependent tRNA 4-demethylwyosine synthase (342 aa).

[2Fe-2S] cluster contacts are provided by cysteine 45, cysteine 58, and cysteine 71. One can recognise a Radical SAM core domain in the interval 64–312 (YGIHSHRCLQ…VKHLPGYHIE (249 aa)). [4Fe-4S] cluster is bound by residues cysteine 81, cysteine 85, and cysteine 88.

The protein belongs to the TYW1 family. In terms of assembly, monomer. [2Fe-2S] cluster is required as a cofactor. [4Fe-4S] cluster serves as cofactor.

The protein resides in the cytoplasm. It catalyses the reaction N(1)-methylguanosine(37) in tRNA(Phe) + pyruvate + S-adenosyl-L-methionine = 4-demethylwyosine(37) in tRNA(Phe) + 5'-deoxyadenosine + L-methionine + CO2 + H2O. Its function is as follows. Component of the wyosine derivatives biosynthesis pathway that catalyzes the condensation of N-methylguanine with 2 carbon atoms from pyruvate to form the tricyclic 4-demethylwyosine (imG-14) on guanosine-37 of tRNA(Phe). This chain is S-adenosyl-L-methionine-dependent tRNA 4-demethylwyosine synthase, found in Pyrococcus horikoshii (strain ATCC 700860 / DSM 12428 / JCM 9974 / NBRC 100139 / OT-3).